Consider the following 387-residue polypeptide: Phosphoglycerate kinase (387 aa).

Residues 21–23 (DLN), Arg-36, 59–62 (HLGR), Arg-113, and Arg-146 contribute to the substrate site. Residues Lys-197, Glu-314, and 340 to 343 (GGDT) contribute to the ATP site.

It belongs to the phosphoglycerate kinase family. Monomer.

It is found in the cytoplasm. The catalysed reaction is (2R)-3-phosphoglycerate + ATP = (2R)-3-phospho-glyceroyl phosphate + ADP. Its pathway is carbohydrate degradation; glycolysis; pyruvate from D-glyceraldehyde 3-phosphate: step 2/5. The polypeptide is Phosphoglycerate kinase (Pseudomonas fluorescens (strain SBW25)).